Consider the following 240-residue polypeptide: Putative N-acetylmannosamine-6-phosphate 2-epimerase (240 aa).

This sequence belongs to the NanE family.

The enzyme catalyses an N-acyl-D-glucosamine 6-phosphate = an N-acyl-D-mannosamine 6-phosphate. The protein operates within amino-sugar metabolism; N-acetylneuraminate degradation; D-fructose 6-phosphate from N-acetylneuraminate: step 3/5. Its function is as follows. Converts N-acetylmannosamine-6-phosphate (ManNAc-6-P) to N-acetylglucosamine-6-phosphate (GlcNAc-6-P). The chain is Putative N-acetylmannosamine-6-phosphate 2-epimerase from Vibrio cholerae serotype O1 (strain ATCC 39541 / Classical Ogawa 395 / O395).